The sequence spans 126 residues: Large ribosomal subunit protein bL17 (126 aa).

Belongs to the bacterial ribosomal protein bL17 family. As to quaternary structure, part of the 50S ribosomal subunit. Contacts protein L32.

This Xylella fastidiosa (strain Temecula1 / ATCC 700964) protein is Large ribosomal subunit protein bL17.